Reading from the N-terminus, the 322-residue chain is o-succinylbenzoate synthase (322 aa).

K136 (proton donor) is an active-site residue. Mg(2+) contacts are provided by D165, E194, and D219. The active-site Proton acceptor is K243.

The protein belongs to the mandelate racemase/muconate lactonizing enzyme family. MenC type 1 subfamily. Monomer. Requires a divalent metal cation as cofactor.

It catalyses the reaction (1R,6R)-6-hydroxy-2-succinyl-cyclohexa-2,4-diene-1-carboxylate = 2-succinylbenzoate + H2O. The protein operates within quinol/quinone metabolism; 1,4-dihydroxy-2-naphthoate biosynthesis; 1,4-dihydroxy-2-naphthoate from chorismate: step 4/7. It functions in the pathway cofactor biosynthesis; phylloquinone biosynthesis. Converts 2-succinyl-6-hydroxy-2,4-cyclohexadiene-1-carboxylate (SHCHC) to 2-succinylbenzoate (OSB). Does not show N-succinylamino acid racemase (NSAR) activity with N-succinyl-L-phenylglycine as substrate. This Thermosynechococcus vestitus (strain NIES-2133 / IAM M-273 / BP-1) protein is o-succinylbenzoate synthase.